Here is a 213-residue protein sequence, read N- to C-terminus: Small ribosomal subunit protein eS6 (213 aa).

It belongs to the eukaryotic ribosomal protein eS6 family.

The sequence is that of Small ribosomal subunit protein eS6 from Sulfolobus acidocaldarius (strain ATCC 33909 / DSM 639 / JCM 8929 / NBRC 15157 / NCIMB 11770).